The chain runs to 260 residues: Proteasome subunit alpha (260 aa).

It belongs to the peptidase T1A family. In terms of assembly, the 20S proteasome core is composed of 14 alpha and 14 beta subunits that assemble into four stacked heptameric rings, resulting in a barrel-shaped structure. The two inner rings, each composed of seven catalytic beta subunits, are sandwiched by two outer rings, each composed of seven alpha subunits. The catalytic chamber with the active sites is on the inside of the barrel. Has a gated structure, the ends of the cylinder being occluded by the N-termini of the alpha-subunits. Is capped at one or both ends by the proteasome regulatory ATPase, PAN.

The protein resides in the cytoplasm. With respect to regulation, the formation of the proteasomal ATPase PAN-20S proteasome complex, via the docking of the C-termini of PAN into the intersubunit pockets in the alpha-rings, triggers opening of the gate for substrate entry. Interconversion between the open-gate and close-gate conformations leads to a dynamic regulation of the 20S proteasome proteolysis activity. In terms of biological role, component of the proteasome core, a large protease complex with broad specificity involved in protein degradation. The chain is Proteasome subunit alpha from Pyrococcus abyssi (strain GE5 / Orsay).